The chain runs to 291 residues: Proteasome subunit beta (291 aa).

Positions 1–56 are cleaved as a propeptide — removed in mature form; by autocatalysis; it reads MTRSFPDRLPTNLAFPGISVINQSSFVDLLRRQAPELLPVSLGGGQSGGGQQLSHG. The Nucleophile role is filled by Thr57.

The protein belongs to the peptidase T1B family. The 20S proteasome core is composed of 14 alpha and 14 beta subunits that assemble into four stacked heptameric rings, resulting in a barrel-shaped structure. The two inner rings, each composed of seven catalytic beta subunits, are sandwiched by two outer rings, each composed of seven alpha subunits. The catalytic chamber with the active sites is on the inside of the barrel. Has a gated structure, the ends of the cylinder being occluded by the N-termini of the alpha-subunits. Is capped by the proteasome-associated ATPase, ARC.

The protein resides in the cytoplasm. The catalysed reaction is Cleavage of peptide bonds with very broad specificity.. The protein operates within protein degradation; proteasomal Pup-dependent pathway. Its activity is regulated as follows. The formation of the proteasomal ATPase ARC-20S proteasome complex, likely via the docking of the C-termini of ARC into the intersubunit pockets in the alpha-rings, may trigger opening of the gate for substrate entry. Interconversion between the open-gate and close-gate conformations leads to a dynamic regulation of the 20S proteasome proteolysis activity. Functionally, component of the proteasome core, a large protease complex with broad specificity involved in protein degradation. The polypeptide is Proteasome subunit beta (Mycobacterium leprae (strain Br4923)).